The primary structure comprises 377 residues: 8-amino-7-oxononanoate synthase (377 aa).

R13 contributes to the substrate binding site. 100-101 (GY) lines the pyridoxal 5'-phosphate pocket. H125 provides a ligand contact to substrate. The pyridoxal 5'-phosphate site is built by S171, H199, and T228. Residue K231 is modified to N6-(pyridoxal phosphate)lysine. Substrate is bound at residue T345.

The protein belongs to the class-II pyridoxal-phosphate-dependent aminotransferase family. BioF subfamily. In terms of assembly, homodimer. The cofactor is pyridoxal 5'-phosphate.

It catalyses the reaction 6-carboxyhexanoyl-[ACP] + L-alanine + H(+) = (8S)-8-amino-7-oxononanoate + holo-[ACP] + CO2. The protein operates within cofactor biosynthesis; biotin biosynthesis. Functionally, catalyzes the decarboxylative condensation of pimeloyl-[acyl-carrier protein] and L-alanine to produce 8-amino-7-oxononanoate (AON), [acyl-carrier protein], and carbon dioxide. In Nitrosococcus oceani (strain ATCC 19707 / BCRC 17464 / JCM 30415 / NCIMB 11848 / C-107), this protein is 8-amino-7-oxononanoate synthase.